The primary structure comprises 115 residues: Large ribosomal subunit protein bL19 (115 aa).

It belongs to the bacterial ribosomal protein bL19 family.

In terms of biological role, this protein is located at the 30S-50S ribosomal subunit interface and may play a role in the structure and function of the aminoacyl-tRNA binding site. This is Large ribosomal subunit protein bL19 from Buchnera aphidicola subsp. Acyrthosiphon pisum (strain Tuc7).